Reading from the N-terminus, the 207-residue chain is LexA repressor (207 aa).

Residues 28 to 48 (VREIGEAVGLASSSTVHGHLA) constitute a DNA-binding region (H-T-H motif). Catalysis depends on for autocatalytic cleavage activity residues Ser129 and Lys167.

It belongs to the peptidase S24 family. In terms of assembly, homodimer.

It carries out the reaction Hydrolysis of Ala-|-Gly bond in repressor LexA.. Functionally, represses a number of genes involved in the response to DNA damage (SOS response), including recA and lexA. In the presence of single-stranded DNA, RecA interacts with LexA causing an autocatalytic cleavage which disrupts the DNA-binding part of LexA, leading to derepression of the SOS regulon and eventually DNA repair. In Brevibacillus brevis (strain 47 / JCM 6285 / NBRC 100599), this protein is LexA repressor.